Reading from the N-terminus, the 64-residue chain is Prokaryotic ubiquitin-like protein Pup (64 aa).

Positions 1–11 (MAQEQTKRGGG) are enriched in basic and acidic residues. Residues 1-37 (MAQEQTKRGGGGDDEDDFASSTAAGQERREKLAEDTD) form a disordered region. The segment at 21–58 (STAAGQERREKLAEDTDDLLDEIDDVLEENAEDFVRAY) is ARC ATPase binding. Residues 24–52 (AGQERREKLAEDTDDLLDEIDDVLEENAE) adopt a coiled-coil conformation. Gln64 carries the deamidated glutamine modification. Residue Gln64 forms an Isoglutamyl lysine isopeptide (Gln-Lys) (interchain with K-? in acceptor proteins) linkage.

It belongs to the prokaryotic ubiquitin-like protein family. Strongly interacts with the proteasome-associated ATPase ARC through a hydrophobic interface; the interacting region of Pup lies in its C-terminal half. There is one Pup binding site per ARC hexamer ring. Is modified by deamidation of its C-terminal glutamine to glutamate by the deamidase Dop, a prerequisite to the subsequent pupylation process.

The protein operates within protein degradation; proteasomal Pup-dependent pathway. In terms of biological role, protein modifier that is covalently attached to lysine residues of substrate proteins, thereby targeting them for proteasomal degradation. The tagging system is termed pupylation. The polypeptide is Prokaryotic ubiquitin-like protein Pup (Mycolicibacterium paratuberculosis (strain ATCC BAA-968 / K-10) (Mycobacterium paratuberculosis)).